Reading from the N-terminus, the 303-residue chain is MSHISVLLHETVDALLANRDTGIYIDGTFGRGGHTRLLLSKLGSDAQVYGFDKDPQALAVAHQLEQEDLRFKIIHASFADIQTELEQRGITQVEGVMADLGVSSPQLDQAERGFSFMQDGPLDMRMDNSQGKTAAEWLLSIEEEALANIIYQYGEERYSRRIARAIKQAGALETTAQLAELVKTAHPKWEKHKHPATRTFQAIRIAINKELEDIEIFLPQAVTLLKPEGRLAVITFHSLEDRLIKQFIQKESTLPEDSGWGLPQKQVDSRRLKKISRIRASEEEVKANPRSRSAWLRVAERLV.

Residues 32–34, Asp-52, Phe-78, Asp-99, and Gln-106 each bind S-adenosyl-L-methionine; that span reads GGH.

This sequence belongs to the methyltransferase superfamily. RsmH family.

The protein localises to the cytoplasm. The enzyme catalyses cytidine(1402) in 16S rRNA + S-adenosyl-L-methionine = N(4)-methylcytidine(1402) in 16S rRNA + S-adenosyl-L-homocysteine + H(+). In terms of biological role, specifically methylates the N4 position of cytidine in position 1402 (C1402) of 16S rRNA. This is Ribosomal RNA small subunit methyltransferase H from Acinetobacter baylyi (strain ATCC 33305 / BD413 / ADP1).